The primary structure comprises 874 residues: Probable inorganic carbon transporter subunit DabA (874 aa).

The Zn(2+) site is built by C398, D400, H580, and C595.

This sequence belongs to the inorganic carbon transporter (TC 9.A.2) DabA family. Forms a complex with DabB. Zn(2+) is required as a cofactor.

The protein resides in the cell membrane. Part of an energy-coupled inorganic carbon pump. In Bacillus cereus (strain ATCC 10987 / NRS 248), this protein is Probable inorganic carbon transporter subunit DabA.